The chain runs to 921 residues: MMALGEPYYSSKPDKDFNFGSTMARRQMTPTMVTKLPKFVRNSPQAYDWIVRGLIFPTTGKTYFQRVVVITGGLEDGTYGSYAFNGSEWVEIYPIEHLNLMSSLKLIHKANALQERLRLSQEEKATLALDVQFLQHENVRLKELIPKPEPRKIQMKWIIVGAVLTFLSLIPGGYAQSQTNNTIFTDMIAACKYSTETLTENLDLRIKLALANITINDKLDAVRQILNFAFVPRAHWLRTVFYYIHYYEMWNIFMFVLAIGTVMRSARPGTDLITLATSHLSGFRMAVLPTIPFHTTMTLWVMNTLMVCYYFDNLLAITMAILAPILGIIFLCFMEDSNYVSQIRGLIATAVLIAGGHACLTLTGTTTSLFVVILTCRFIRMATVFIGTRFEIRDANGKVVATVPTRIKNVAFDFFQKLKQSGVRVGVNDFVVIKPGALCIIDTPEGKGTGFFSGNDIVTAAHVVGNNTFVSVCYEGLVYEAKVRYMPEKDIAFITCPGDLHPTARLKLSKNPDYSCVTVMAYVNEDLVVSTATAMVHGNTLSYAVRTQDGMSGAPVCDKYGRVLAVHQTNTGYTGGAVIIDPADFHPVKAPSQVELLKEEIERLKAQLNSAAENPVTVVTQQPIVTLEQKSVSDSDVVDLVRTAMEREMKVLRDEINGILAPFLQKKKGKTKHGRGRVRRNLRKGVKLLTEEEYRELLEKGLDRETFLDLIDRIIGERSGYPDYDDEDYYDEDDDGWGMVGDDVEFDYTEVINFDQAKPTPAPRTTKPKPCPEPKIEAQPLDLSQKKEKQPEHEQQVAKPTKPQKIEPQPYSQTYGKAPIWESYDFDWDEDDAKFILPAPHRLTKADEIVLGSKIVKLRTIIETAIKTQNYSALPEAVFELDKAAYEAGLEGFLQRVKSKNKAPKNYKGPQKTKGPKTTTH.

4 helical membrane-spanning segments follow: residues 240–260 (VFYY…LAIG), 287–307 (VLPT…TLMV), 314–334 (LLAI…LCFM), and 345–365 (GLIA…LTGT). Residues H462, D490, and S552 each act as charge relay system; for serine protease activity in the active site. Y694 carries the post-translational modification O-(5'-phospho-RNA)-tyrosine. Disordered stretches follow at residues 753 to 813 (NFDQ…PYSQ) and 900 to 921 (KNKA…TTTH). The segment covering 784 to 796 (SQKKEKQPEHEQQ) has biased composition (basic and acidic residues). The segment covering 908–921 (KGPQKTKGPKTTTH) has biased composition (low complexity).

It belongs to the astroviridae polyprotein 1A family. Monomer. Cleaved by the viral and host proteases. The protease is probably autocatalytically cleaved.

Its subcellular location is the host membrane. The enzyme catalyses RNA(n) + a ribonucleoside 5'-triphosphate = RNA(n+1) + diphosphate. In terms of biological role, responsible for the cleavage of the polyprotein into functional products. Protein covalently attached to the 5' extremity of the genomic and subgenomic RNAs. It may serve as a primer for the replicase. This Homo sapiens (Human) protein is Non-structural polyprotein 1A (ORF1).